The following is a 121-amino-acid chain: Large ribosomal subunit protein uL18 (121 aa).

This sequence belongs to the universal ribosomal protein uL18 family. Part of the 50S ribosomal subunit; part of the 5S rRNA/L5/L18/L25 subcomplex. Contacts the 5S and 23S rRNAs.

Functionally, this is one of the proteins that bind and probably mediate the attachment of the 5S RNA into the large ribosomal subunit, where it forms part of the central protuberance. This Paraburkholderia phytofirmans (strain DSM 17436 / LMG 22146 / PsJN) (Burkholderia phytofirmans) protein is Large ribosomal subunit protein uL18.